We begin with the raw amino-acid sequence, 232 residues long: 2-C-methyl-D-erythritol 4-phosphate cytidylyltransferase (232 aa).

It belongs to the IspD/TarI cytidylyltransferase family. IspD subfamily.

It carries out the reaction 2-C-methyl-D-erythritol 4-phosphate + CTP + H(+) = 4-CDP-2-C-methyl-D-erythritol + diphosphate. It functions in the pathway isoprenoid biosynthesis; isopentenyl diphosphate biosynthesis via DXP pathway; isopentenyl diphosphate from 1-deoxy-D-xylulose 5-phosphate: step 2/6. Functionally, catalyzes the formation of 4-diphosphocytidyl-2-C-methyl-D-erythritol from CTP and 2-C-methyl-D-erythritol 4-phosphate (MEP). In Vibrio cholerae serotype O1 (strain ATCC 39315 / El Tor Inaba N16961), this protein is 2-C-methyl-D-erythritol 4-phosphate cytidylyltransferase.